The sequence spans 118 residues: Basic phospholipase A2 PA-13 (118 aa).

Disulfide bonds link cysteine 11–cysteine 71, cysteine 27–cysteine 117, cysteine 29–cysteine 45, cysteine 44–cysteine 98, cysteine 51–cysteine 91, cysteine 60–cysteine 84, and cysteine 78–cysteine 89. The Ca(2+) site is built by tyrosine 28, glycine 30, and glycine 32. Histidine 48 is an active-site residue. Aspartate 49 is a Ca(2+) binding site. Aspartate 92 is a catalytic residue.

The protein belongs to the phospholipase A2 family. Group I subfamily. D49 sub-subfamily. Ca(2+) is required as a cofactor. As to expression, expressed by the venom gland.

Its subcellular location is the secreted. The enzyme catalyses a 1,2-diacyl-sn-glycero-3-phosphocholine + H2O = a 1-acyl-sn-glycero-3-phosphocholine + a fatty acid + H(+). Functionally, PLA2 catalyzes the calcium-dependent hydrolysis of the 2-acyl groups in 3-sn-phosphoglycerides. The protein is Basic phospholipase A2 PA-13 of Pseudechis australis (Mulga snake).